Reading from the N-terminus, the 131-residue chain is Small ribosomal subunit protein uS10m (131 aa).

This sequence belongs to the universal ribosomal protein uS10 family.

The protein localises to the mitochondrion. The protein is Small ribosomal subunit protein uS10m (mrps10) of Dictyostelium discoideum (Social amoeba).